A 432-amino-acid polypeptide reads, in one-letter code: Adenylosuccinate synthetase (432 aa).

GTP contacts are provided by residues 12-18 (GDEGKGK) and 40-42 (GHT). The Proton acceptor role is filled by D13. Mg(2+) contacts are provided by D13 and G40. IMP contacts are provided by residues 13-16 (DEGK), 38-41 (NAGH), T132, R146, Q226, T241, and R305. H41 serves as the catalytic Proton donor. 301 to 307 (TVTGRKR) contributes to the substrate binding site. Residues R307, 333 to 335 (KLD), and 415 to 417 (STS) each bind GTP.

The protein belongs to the adenylosuccinate synthetase family. In terms of assembly, homodimer. Mg(2+) is required as a cofactor.

Its subcellular location is the cytoplasm. It carries out the reaction IMP + L-aspartate + GTP = N(6)-(1,2-dicarboxyethyl)-AMP + GDP + phosphate + 2 H(+). It participates in purine metabolism; AMP biosynthesis via de novo pathway; AMP from IMP: step 1/2. In terms of biological role, plays an important role in the de novo pathway of purine nucleotide biosynthesis. Catalyzes the first committed step in the biosynthesis of AMP from IMP. In Agrobacterium fabrum (strain C58 / ATCC 33970) (Agrobacterium tumefaciens (strain C58)), this protein is Adenylosuccinate synthetase.